A 133-amino-acid chain; its full sequence is T-cell receptor beta chain V region 86T1 (133 aa).

The N-terminal stretch at 1 to 21 (MSCRLLLYVSLCLVETALMNT) is a signal peptide. The v segment stretch occupies residues 22 to 113 (KITQSPRYLI…SAVYFCASSH (92 aa)). Residues Asn-36 and Asn-75 are each glycosylated (N-linked (GlcNAc...) asparagine). Cys-41 and Cys-109 are oxidised to a cystine. A j segment region spans residues 114–133 (GQGVSGNTLYFGEGSRLIVV).

In Mus musculus (Mouse), this protein is T-cell receptor beta chain V region 86T1.